Reading from the N-terminus, the 182-residue chain is Large ribosomal subunit protein uL10 (182 aa).

It belongs to the universal ribosomal protein uL10 family. As to quaternary structure, part of the ribosomal stalk of the 50S ribosomal subunit. The N-terminus interacts with L11 and the large rRNA to form the base of the stalk. The C-terminus forms an elongated spine to which L12 dimers bind in a sequential fashion forming a multimeric L10(L12)X complex.

Functionally, forms part of the ribosomal stalk, playing a central role in the interaction of the ribosome with GTP-bound translation factors. This is Large ribosomal subunit protein uL10 from Microcystis aeruginosa (strain NIES-843 / IAM M-2473).